The sequence spans 390 residues: Odorant receptor 85b (390 aa).

Topologically, residues 1–30 are cytoplasmic; sequence MEKLMKYASFFYTAVGIRPYTNGEESKMNK. The helical transmembrane segment at 31–51 threads the bilayer; it reads LIFHIVFWSNVINLSFVGLFE. The Extracellular segment spans residues 52–66; it reads SIYVYSAFMDNKFLE. Residues 67–87 traverse the membrane as a helical segment; that stretch reads AVTALSYIGFVTVGMSKMFFI. At 88–126 the chain is on the cytoplasmic side; sequence RWKKTAITELINELKEIYPNGLIREERYNLPMYLGTCSR. A helical membrane pass occupies residues 127 to 147; it reads ISLIYSLLYSVLIWTFNLFCV. Residues 148–200 are Extracellular-facing; it reads MEYWVYDKWLNIRVVGKQLPYLMYIPWKWQDNWSYYPLLFSQNFAGYTSAAGQ. Asn-179 carries an N-linked (GlcNAc...) asparagine glycan. The helical transmembrane segment at 201-221 threads the bilayer; the sequence is ISTDVLLCAVATQLVMHFDFL. Residues 222–260 lie on the Cytoplasmic side of the membrane; the sequence is SNSMERHELSGDWKKDSRFLVDIVRYHERILRLSDAVND. The chain crosses the membrane as a helical span at residues 261–281; the sequence is IFGIPLLLNFMVSSFVICFVG. The Extracellular segment spans residues 282 to 291; that stretch reads FQMTVGVPPD. A helical membrane pass occupies residues 292–312; sequence IVVKLFLFLVSSMSQVYLICH. The Cytoplasmic segment spans residues 313–360; the sequence is YGQLVADASYGFSVATYNQKWYKADVRYKRALVIIIARSQKVTFLKAT. Residues 361 to 381 form a helical membrane-spanning segment; that stretch reads IFLDITRSTMTDLLQISYKFF. At 382–390 the chain is on the extracellular side; that stretch reads ALLRTMYTQ.

It belongs to the insect chemoreceptor superfamily. Heteromeric odorant receptor channel (TC 1.A.69) family. Or49a subfamily. As to quaternary structure, interacts with Orco. Complexes exist early in the endomembrane system in olfactory sensory neurons (OSNs), coupling these complexes to the conserved ciliary trafficking pathway. In terms of tissue distribution, expressed in olfactory sensory neurons in the antenna.

Its subcellular location is the cell membrane. Odorant receptor which mediates acceptance or avoidance behavior, depending on its substrates. The odorant receptor repertoire encodes a large collection of odor stimuli that vary widely in identity, intensity, and duration. Forms a complex with Orco to form odorant-sensing units, providing sensitive and prolonged odorant signaling and calcium permeability. Involved in the behavioral responses to 2-heptanone, amyl acetate, and butyl acetate. This chain is Odorant receptor 85b (Or85b), found in Drosophila melanogaster (Fruit fly).